Here is a 498-residue protein sequence, read N- to C-terminus: Cytochrome P450 71B31 (498 aa).

Residues 3–23 traverse the membrane as a helical segment; sequence MFLGLLFLFPLFFILFKNLLP. Residue Cys-441 participates in heme binding.

The protein belongs to the cytochrome P450 family. It depends on heme as a cofactor.

It is found in the membrane. The protein is Cytochrome P450 71B31 (CYP71B31) of Arabidopsis thaliana (Mouse-ear cress).